A 254-amino-acid polypeptide reads, in one-letter code: Pyruvate aldolase (254 aa).

Catalysis depends on histidine 48, which acts as the Proton acceptor. A divalent metal cation-binding residues include glutamate 151 and aspartate 177.

The protein belongs to the HpcH/HpaI aldolase family. A divalent metal cation is required as a cofactor.

The catalysed reaction is D-glyceraldehyde + pyruvate = 2-dehydro-3-deoxy-L-galactonate. Aldolase which can catalyze in vitro the aldolisation reaction between pyruvate (PA) and D-glyceraldehyde (D-GA) to form 2-dehydro-3-deoxy-L-galactonate. The chain is Pyruvate aldolase from Rhizobium etli (strain ATCC 51251 / DSM 11541 / JCM 21823 / NBRC 15573 / CFN 42).